A 776-amino-acid polypeptide reads, in one-letter code: Disintegrin and metalloproteinase domain-containing protein 28 (776 aa).

The N-terminal stretch at 1 to 19 (MLQALLTVSLLLSPVPVSA) is a signal peptide. A propeptide spanning residues 20 to 193 (IKELPGVKKY…IARPATRLVK (174 aa)) is cleaved from the precursor. The Cysteine switch motif lies at 168–175 (STCGTDGV). Residue cysteine 170 participates in Zn(2+) binding. The Extracellular segment spans residues 194–666 (LNDGKVQKHE…CDDSSVVFYF (473 aa)). The region spanning 204 to 400 (KYIEYYLVLD…KLSNCLFNAP (197 aa)) is the Peptidase M12B domain. 2 N-linked (GlcNAc...) asparagine glycosylation sites follow: asparagine 268 and asparagine 275. Disulfide bonds link cysteine 315/cysteine 395, cysteine 355/cysteine 379, cysteine 357/cysteine 362, and cysteine 466/cysteine 486. Histidine 340 contributes to the Zn(2+) binding site. The active site involves glutamate 341. The Zn(2+) site is built by histidine 344 and histidine 350. An N-linked (GlcNAc...) asparagine glycan is attached at asparagine 352. Positions 408–494 (TPICGNQMVE…NCPDDRFRAN (87 aa)) constitute a Disintegrin domain. 3 N-linked (GlcNAc...) asparagine glycosylation sites follow: asparagine 558, asparagine 603, and asparagine 629. One can recognise an EGF-like domain in the interval 626-658 (KSTNCSSKCKGHAVCDHELQCQCEEGWSPPDCD). 3 disulfides stabilise this stretch: cysteine 630/cysteine 640, cysteine 634/cysteine 646, and cysteine 648/cysteine 657. The helical transmembrane segment at 667–687 (SIVVAVLFPVAVISLVVAIVI) threads the bilayer. The Cytoplasmic portion of the chain corresponds to 688 to 776 (RQQSSREKQK…SSFLDSNPKA (89 aa)). Residues 691-701 (SSREKQKKDQR) show a composition bias toward basic and acidic residues. 2 disordered regions span residues 691-728 (SSREKQKKDQRPLSTTGTRPHKQKRKPQMVKAVQPQEM) and 746-776 (PASFLISKPDFSPPPIPAPRSSSFLDSNPKA). Positions 709–718 (RPHKQKRKPQ) are enriched in basic residues.

Zn(2+) serves as cofactor. Pro-domain removal and maturation may be, at least in part, autocatalytic. Expressed at high levels in epididymis and at lower levels in lung.

The protein localises to the membrane. May play a role in the adhesive and proteolytic events that occur during lymphocyte emigration or may function in ectodomain shedding of lymphocyte surface target proteins, such as FASL and CD40L. May be involved in sperm maturation. This Macaca fascicularis (Crab-eating macaque) protein is Disintegrin and metalloproteinase domain-containing protein 28 (ADAM28).